The following is a 329-amino-acid chain: DNA-directed RNA polymerase subunit alpha (329 aa).

Positions 1–234 (MQGSVTEFLK…EQLDAFVELR (234 aa)) are alpha N-terminal domain (alpha-NTD). Residues 248–329 (FDPILLRPVD…WPPASLADDL (82 aa)) are alpha C-terminal domain (alpha-CTD).

Belongs to the RNA polymerase alpha chain family. In terms of assembly, homodimer. The RNAP catalytic core consists of 2 alpha, 1 beta, 1 beta' and 1 omega subunit. When a sigma factor is associated with the core the holoenzyme is formed, which can initiate transcription.

The catalysed reaction is RNA(n) + a ribonucleoside 5'-triphosphate = RNA(n+1) + diphosphate. Its function is as follows. DNA-dependent RNA polymerase catalyzes the transcription of DNA into RNA using the four ribonucleoside triphosphates as substrates. The sequence is that of DNA-directed RNA polymerase subunit alpha from Shewanella sp. (strain ANA-3).